A 199-amino-acid chain; its full sequence is Recombination protein RecR (199 aa).

A C4-type zinc finger spans residues 57–72 (CEICGNMDTENICRIC). The Toprim domain maps to 80-175 (SVIAIVETVA…KISRLASGIP (96 aa)).

It belongs to the RecR family.

Functionally, may play a role in DNA repair. It seems to be involved in an RecBC-independent recombinational process of DNA repair. It may act with RecF and RecO. The polypeptide is Recombination protein RecR (Rickettsia canadensis (strain McKiel)).